We begin with the raw amino-acid sequence, 250 residues long: NAD-dependent protein deacylase (250 aa).

The Deacetylase sirtuin-type domain occupies 1–248 (MLGEVSKILA…PKLVEEIRRI (248 aa)). 20-39 (GAGISAESGIPTFRGKDGLW) is an NAD(+) binding site. Tyr-64 and Arg-67 together coordinate substrate. 98–101 (QNVD) is an NAD(+) binding site. His-116 functions as the Proton acceptor in the catalytic mechanism. Zn(2+) contacts are provided by Cys-124, Cys-127, Cys-150, and Cys-153. NAD(+) is bound by residues 190 to 192 (GTS), 216 to 218 (NIE), and Ala-234.

Belongs to the sirtuin family. Class III subfamily. It depends on Zn(2+) as a cofactor.

The protein resides in the cytoplasm. It carries out the reaction N(6)-acetyl-L-lysyl-[protein] + NAD(+) + H2O = 2''-O-acetyl-ADP-D-ribose + nicotinamide + L-lysyl-[protein]. The enzyme catalyses N(6)-succinyl-L-lysyl-[protein] + NAD(+) + H2O = 2''-O-succinyl-ADP-D-ribose + nicotinamide + L-lysyl-[protein]. Functionally, NAD-dependent lysine deacetylase and desuccinylase that specifically removes acetyl and succinyl groups on target proteins. Modulates the activities of several proteins which are inactive in their acylated form. Deacetylates the N-terminal lysine residue of Alba, the major archaeal chromatin protein and that, in turn, increases Alba's DNA binding affinity, thereby repressing transcription. This chain is NAD-dependent protein deacylase, found in Pyrococcus furiosus (strain ATCC 43587 / DSM 3638 / JCM 8422 / Vc1).